Here is a 454-residue protein sequence, read N- to C-terminus: Epsin-1 (454 aa).

One can recognise an ENTH domain in the interval 11-143 (NLVKGYSSTQ…SDDERLNEER (133 aa)). Disordered stretches follow at residues 142 to 195 (ERNM…EDYE) and 292 to 350 (YLAS…GNQS). The segment covering 149–160 (GRNRKGRRRRGT) has biased composition (basic residues). Threonine 160 is subject to Phosphothreonine. Position 163 is a phosphoserine (serine 163). 2 UIM domains span residues 165-184 (ENDDDLQRAISASRLTAEED) and 189-208 (KQDEDYETALQLSKEEEELK). Position 180 is a phosphothreonine (threonine 180). Residues 180 to 191 (TAEEDERRRKQD) show a composition bias toward basic and acidic residues. The span at 292–302 (YLASMQQQQQA) shows a compositional bias: low complexity. Polar residues-rich tracts occupy residues 303 to 329 (MSNNPFAKSEQSSSSPKRNQLVAASSP) and 340 to 350 (PLIQNRTGNQS). Serine 328 carries the post-translational modification Phosphoserine. Lysine 357 is covalently cross-linked (Glycyl lysine isopeptide (Lys-Gly) (interchain with G-Cter in ubiquitin)). 5 positions are modified to phosphothreonine: threonine 364, threonine 366, threonine 384, threonine 386, and threonine 388. Polar residues predominate over residues 384-398 (TKTGTFINSQGTGYR). Positions 384 to 405 (TKTGTFINSQGTGYRQVSDDPN) are disordered. Threonine 395 and threonine 415 each carry phosphothreonine; by PRK1. A compositionally biased stretch (polar residues) spans 418 to 428 (PSTSVVPTQTG). The tract at residues 418-454 (PSTSVVPTQTGYGFGNQSQQQSQNNGSNNRGYTLIDL) is disordered. The span at 432-446 (GNQSQQQSQNNGSNN) shows a compositional bias: low complexity. The segment at 447–454 (RGYTLIDL) is clathrin-binding.

Belongs to the epsin family. Interacts with EDE1 and PAN1.

It is found in the cytoplasm. It localises to the membrane. Its function is as follows. Binds to membranes enriched in phosphatidylinositol 3,5-bisphosphate (PtdIns(3,5)P2) and phosphatidylinositol 4,5-bisphosphate (PtdIns(4,5)P2). Required for endocytosis and localization of actin. Negatively regulated via phosphorylation. This chain is Epsin-1 (ENT1), found in Saccharomyces cerevisiae (strain ATCC 204508 / S288c) (Baker's yeast).